The following is a 229-amino-acid chain: 2-C-methyl-D-erythritol 4-phosphate cytidylyltransferase (229 aa).

The protein belongs to the IspD/TarI cytidylyltransferase family. IspD subfamily.

The enzyme catalyses 2-C-methyl-D-erythritol 4-phosphate + CTP + H(+) = 4-CDP-2-C-methyl-D-erythritol + diphosphate. It functions in the pathway isoprenoid biosynthesis; isopentenyl diphosphate biosynthesis via DXP pathway; isopentenyl diphosphate from 1-deoxy-D-xylulose 5-phosphate: step 2/6. Functionally, catalyzes the formation of 4-diphosphocytidyl-2-C-methyl-D-erythritol from CTP and 2-C-methyl-D-erythritol 4-phosphate (MEP). The chain is 2-C-methyl-D-erythritol 4-phosphate cytidylyltransferase from Clostridium botulinum (strain ATCC 19397 / Type A).